Reading from the N-terminus, the 696-residue chain is DNA ligase (696 aa).

NAD(+) is bound by residues aspartate 36–aspartate 40, serine 85–leucine 86, and glutamate 123. Lysine 125 serves as the catalytic N6-AMP-lysine intermediate. NAD(+)-binding residues include arginine 146, glutamate 181, lysine 319, and lysine 343. Residues cysteine 437, cysteine 440, cysteine 455, and cysteine 461 each coordinate Zn(2+). The 79-residue stretch at proline 618 to leucine 696 folds into the BRCT domain.

This sequence belongs to the NAD-dependent DNA ligase family. LigA subfamily. Mg(2+) is required as a cofactor. The cofactor is Mn(2+).

The catalysed reaction is NAD(+) + (deoxyribonucleotide)n-3'-hydroxyl + 5'-phospho-(deoxyribonucleotide)m = (deoxyribonucleotide)n+m + AMP + beta-nicotinamide D-nucleotide.. DNA ligase that catalyzes the formation of phosphodiester linkages between 5'-phosphoryl and 3'-hydroxyl groups in double-stranded DNA using NAD as a coenzyme and as the energy source for the reaction. It is essential for DNA replication and repair of damaged DNA. This Bordetella pertussis (strain Tohama I / ATCC BAA-589 / NCTC 13251) protein is DNA ligase.